Consider the following 240-residue polypeptide: Peptidyl-tRNA hydrolase (240 aa).

Residue Tyr-14 coordinates tRNA. The active-site Proton acceptor is His-19. Residues Tyr-64, Asn-66, and Asn-112 each contribute to the tRNA site. Residues 190–204 (KADEEKPRKDSEKKP) show a composition bias toward basic and acidic residues. The interval 190–240 (KADEEKPRKDSEKKPAGQSHIRQARNNNQPKLPATGPMADMLKKMFGNKGE) is disordered. Residues 209-219 (HIRQARNNNQP) show a composition bias toward polar residues.

This sequence belongs to the PTH family. As to quaternary structure, monomer.

It localises to the cytoplasm. It catalyses the reaction an N-acyl-L-alpha-aminoacyl-tRNA + H2O = an N-acyl-L-amino acid + a tRNA + H(+). In terms of biological role, hydrolyzes ribosome-free peptidyl-tRNAs (with 1 or more amino acids incorporated), which drop off the ribosome during protein synthesis, or as a result of ribosome stalling. Catalyzes the release of premature peptidyl moieties from peptidyl-tRNA molecules trapped in stalled 50S ribosomal subunits, and thus maintains levels of free tRNAs and 50S ribosomes. The polypeptide is Peptidyl-tRNA hydrolase (Rhizobium etli (strain ATCC 51251 / DSM 11541 / JCM 21823 / NBRC 15573 / CFN 42)).